The primary structure comprises 395 residues: Lipoyl synthase, mitochondrial (395 aa).

A mitochondrion-targeting transit peptide spans Met-1 to Gln-14. The [4Fe-4S] cluster site is built by Cys-112, Cys-117, Cys-123, Cys-142, Cys-146, Cys-149, and Ser-357. The Radical SAM core domain maps to Lys-127 to Leu-346.

The protein belongs to the radical SAM superfamily. Lipoyl synthase family. It depends on [4Fe-4S] cluster as a cofactor.

It localises to the mitochondrion. The enzyme catalyses [[Fe-S] cluster scaffold protein carrying a second [4Fe-4S](2+) cluster] + N(6)-octanoyl-L-lysyl-[protein] + 2 oxidized [2Fe-2S]-[ferredoxin] + 2 S-adenosyl-L-methionine + 4 H(+) = [[Fe-S] cluster scaffold protein] + N(6)-[(R)-dihydrolipoyl]-L-lysyl-[protein] + 4 Fe(3+) + 2 hydrogen sulfide + 2 5'-deoxyadenosine + 2 L-methionine + 2 reduced [2Fe-2S]-[ferredoxin]. The protein operates within protein modification; protein lipoylation via endogenous pathway; protein N(6)-(lipoyl)lysine from octanoyl-[acyl-carrier-protein]: step 2/2. In terms of biological role, catalyzes the radical-mediated insertion of two sulfur atoms into the C-6 and C-8 positions of the octanoyl moiety bound to the lipoyl domains of lipoate-dependent enzymes, thereby converting the octanoylated domains into lipoylated derivatives. In Debaryomyces hansenii (strain ATCC 36239 / CBS 767 / BCRC 21394 / JCM 1990 / NBRC 0083 / IGC 2968) (Yeast), this protein is Lipoyl synthase, mitochondrial.